We begin with the raw amino-acid sequence, 94 residues long: Integration host factor subunit beta (94 aa).

Belongs to the bacterial histone-like protein family. In terms of assembly, heterodimer of an alpha and a beta chain.

Functionally, this protein is one of the two subunits of integration host factor, a specific DNA-binding protein that functions in genetic recombination as well as in transcriptional and translational control. The polypeptide is Integration host factor subunit beta (Edwardsiella ictaluri (strain 93-146)).